The sequence spans 406 residues: Arginine biosynthesis bifunctional protein ArgJ (406 aa).

Residues threonine 152, lysine 179, threonine 190, glutamate 277, asparagine 401, and serine 406 each contribute to the substrate site. The active-site Nucleophile is the threonine 190.

The protein belongs to the ArgJ family. In terms of assembly, heterotetramer of two alpha and two beta chains.

The protein localises to the cytoplasm. The catalysed reaction is N(2)-acetyl-L-ornithine + L-glutamate = N-acetyl-L-glutamate + L-ornithine. The enzyme catalyses L-glutamate + acetyl-CoA = N-acetyl-L-glutamate + CoA + H(+). It functions in the pathway amino-acid biosynthesis; L-arginine biosynthesis; L-ornithine and N-acetyl-L-glutamate from L-glutamate and N(2)-acetyl-L-ornithine (cyclic): step 1/1. Its pathway is amino-acid biosynthesis; L-arginine biosynthesis; N(2)-acetyl-L-ornithine from L-glutamate: step 1/4. Catalyzes two activities which are involved in the cyclic version of arginine biosynthesis: the synthesis of N-acetylglutamate from glutamate and acetyl-CoA as the acetyl donor, and of ornithine by transacetylation between N(2)-acetylornithine and glutamate. The polypeptide is Arginine biosynthesis bifunctional protein ArgJ (Neisseria gonorrhoeae (strain ATCC 700825 / FA 1090)).